The primary structure comprises 301 residues: GTPase Era (301 aa).

Residues lysine 6 to isoleucine 173 enclose the Era-type G domain. The G1 stretch occupies residues glycine 14–serine 21. Glycine 14 to serine 21 contacts GTP. Positions glutamine 40–asparagine 44 are G2. The segment at aspartate 61–glycine 64 is G3. GTP-binding positions include aspartate 61–isoleucine 65 and asparagine 123–aspartate 126. Positions asparagine 123–aspartate 126 are G4. Residues isoleucine 152–alanine 154 form a G5 region. Positions threonine 204 to lysine 282 constitute a KH type-2 domain.

It belongs to the TRAFAC class TrmE-Era-EngA-EngB-Septin-like GTPase superfamily. Era GTPase family. As to quaternary structure, monomer.

It localises to the cytoplasm. The protein resides in the cell membrane. An essential GTPase that binds both GDP and GTP, with rapid nucleotide exchange. Plays a role in 16S rRNA processing and 30S ribosomal subunit biogenesis and possibly also in cell cycle regulation and energy metabolism. The sequence is that of GTPase Era from Listeria welshimeri serovar 6b (strain ATCC 35897 / DSM 20650 / CCUG 15529 / CIP 8149 / NCTC 11857 / SLCC 5334 / V8).